We begin with the raw amino-acid sequence, 309 residues long: Calcium homeostasis modulator protein 5 (309 aa).

The Cytoplasmic portion of the chain corresponds to 1–15 (MDAFQSILKFFLNQK). A helical transmembrane segment spans residues 16-37 (TAIGYSFMALLTVGSERLFSLV). Residues Arg-32 and Val-37 each coordinate a 1,2-diacyl-sn-glycero-3-phosphate. The Extracellular segment spans residues 38–45 (AFKCPCSI). 3 disulfide bridges follow: Cys-41–Cys-127, Cys-43–Cys-158, and Cys-142–Cys-149. A helical transmembrane segment spans residues 46 to 70 (ENTAYGLVFLFAPAWVLLILGFFLN). The Cytoplasmic segment spans residues 71–99 (NKAWRLFTGCCMNPQKIFPRRRCCRFFYV). A helical transmembrane segment spans residues 100-129 (LGHITLSSLVAPVMWLSVALLNGTFYECAM). Asn-121 contributes to the a 1,2-diacyl-sn-glycero-3-phosphate binding site. Residues 130 to 174 (SGTRSTRLLEMICKGKPKECWEELHKVSCGKSSMAAMDSEEVRLS) are Extracellular-facing. A helical transmembrane segment spans residues 175-200 (LQAQSQILGWCLICSASFFSLLTTCY). Residues 201-309 (ARCRSKVSYL…MILVGTAQSL (109 aa)) lie on the Cytoplasmic side of the membrane. Arg-202 lines the a 1,2-diacyl-sn-glycero-3-phosphate pocket.

Belongs to the CALHM family. In terms of assembly, oligomerizes to form undecameric cone-shaped channels.

The protein localises to the membrane. Functionally, may assemble to form large pore channels with gating and ion conductance likely regulated by membrane lipids. This Rattus norvegicus (Rat) protein is Calcium homeostasis modulator protein 5.